Here is a 1174-residue protein sequence, read N- to C-terminus: Probable DNA-directed RNA polymerase I subunit RPA2 (1174 aa).

Residues 1-16 are compositionally biased toward basic and acidic residues; it reads MSFQTLERERTFKNPP. Residues 1 to 23 are disordered; that stretch reads MSFQTLERERTFKNPPKDGTSFP. Residues 1089 to 1118 form a C4-type zinc finger; the sequence is CRDCGSIISIMSTISMNGVGSASEVRCRSC.

It belongs to the RNA polymerase beta chain family. As to quaternary structure, component of the RNA polymerase I (Pol I) complex consisting of 14 subunits.

Its subcellular location is the nucleus. It is found in the nucleolus. The enzyme catalyses RNA(n) + a ribonucleoside 5'-triphosphate = RNA(n+1) + diphosphate. In terms of biological role, DNA-dependent RNA polymerase catalyzes the transcription of DNA into RNA using the four ribonucleoside triphosphates as substrates. Second largest core component of RNA polymerase I which synthesizes ribosomal RNA precursors. Proposed to contribute to the polymerase catalytic activity and forms the polymerase active center together with the largest subunit. Pol I is composed of mobile elements and RPA2 is part of the core element with the central large cleft and probably a clamp element that moves to open and close the cleft. The chain is Probable DNA-directed RNA polymerase I subunit RPA2 (rpa2) from Schizosaccharomyces pombe (strain 972 / ATCC 24843) (Fission yeast).